We begin with the raw amino-acid sequence, 151 residues long: Large ribosomal subunit protein uL22c (151 aa).

It belongs to the universal ribosomal protein uL22 family. As to quaternary structure, part of the 50S ribosomal subunit.

Its subcellular location is the plastid. The protein localises to the chloroplast. Its function is as follows. This protein binds specifically to 23S rRNA. In terms of biological role, the globular domain of the protein is located near the polypeptide exit tunnel on the outside of the subunit, while an extended beta-hairpin is found that lines the wall of the exit tunnel in the center of the 70S ribosome. In Gossypium barbadense (Sea Island cotton), this protein is Large ribosomal subunit protein uL22c (rpl22).